A 490-amino-acid chain; its full sequence is Recombinase Flp protein (490 aa).

The region spanning 152–437 is the Tyr recombinase Flp-type domain; it reads LGNKINDEIT…VFLSSYARFK (286 aa). Tyr-358 acts as the O-(3'-phospho-DNA)-tyrosine intermediate in catalysis.

This sequence belongs to the 'phage' integrase family.

Functionally, catalyzes the recombination between the large inverted repetitions of the plasmid. This is Recombinase Flp protein (R) from Zygosaccharomyces rouxii.